A 254-amino-acid chain; its full sequence is Ditrans,polycis-undecaprenyl-diphosphate synthase ((2E,6E)-farnesyl-diphosphate specific) (254 aa).

Asp-25 is a catalytic residue. Residue Asp-25 participates in Mg(2+) binding. Residues 26–29 (GNGR), Trp-30, Arg-38, His-42, and 70–72 (SSE) contribute to the substrate site. Asn-73 acts as the Proton acceptor in catalysis. Substrate is bound by residues Trp-74, Arg-76, and Arg-193. Mg(2+) is bound at residue His-198. Substrate is bound at residue 199–201 (RIS). A Mg(2+)-binding site is contributed by Glu-212.

Belongs to the UPP synthase family. Homodimer. Mg(2+) is required as a cofactor.

It carries out the reaction 8 isopentenyl diphosphate + (2E,6E)-farnesyl diphosphate = di-trans,octa-cis-undecaprenyl diphosphate + 8 diphosphate. In terms of biological role, catalyzes the sequential condensation of isopentenyl diphosphate (IPP) with (2E,6E)-farnesyl diphosphate (E,E-FPP) to yield (2Z,6Z,10Z,14Z,18Z,22Z,26Z,30Z,34E,38E)-undecaprenyl diphosphate (di-trans,octa-cis-UPP). UPP is the precursor of glycosyl carrier lipid in the biosynthesis of bacterial cell wall polysaccharide components such as peptidoglycan and lipopolysaccharide. The polypeptide is Ditrans,polycis-undecaprenyl-diphosphate synthase ((2E,6E)-farnesyl-diphosphate specific) (Photorhabdus laumondii subsp. laumondii (strain DSM 15139 / CIP 105565 / TT01) (Photorhabdus luminescens subsp. laumondii)).